The primary structure comprises 187 residues: Mitochondrial import receptor subunit TOM20-4 (187 aa).

An N-acetylmethionine modification is found at Met1. Over Met1–Asp160 the chain is Cytoplasmic. Residues Leu84 to Ser117 form a TPR repeat. Residues Val161–Ala178 form a helical membrane-spanning segment. Residues Asn179 to Gln187 are Mitochondrial intermembrane-facing. The AKR2A-binding sequence (ABS) required for mitochondrion outer membrane targeting signature appears at Asn179–Gln187.

This sequence belongs to the Tom20 family. Forms part of the preprotein translocase complex of the outer mitochondrial membrane (TOM complex) which consists of at least 6 different proteins (TOM5, TOM6, TOM7, TOM20, TOM22/TOM9 and TOM40). Interacts with a variety of mitochondrial precursor proteins. Interacts with AKR2A. Component of a mitochondrial large protein complex that contains, at least, MIC60, DGS1, TOM40, TOM20 proteins, and petC/RISP. Post-translationally, the N-terminus is blocked. In terms of tissue distribution, expressed in roots, flowers, young cotyledons and leaves.

It is found in the mitochondrion outer membrane. Its function is as follows. Central component of the receptor complex responsible for the recognition and translocation of cytosolically synthesized mitochondrial preproteins. Together with TOM22 functions as the transit peptide receptor at the surface of the mitochondrion outer membrane and facilitates the movement of preproteins into the translocation pore. The sequence is that of Mitochondrial import receptor subunit TOM20-4 from Arabidopsis thaliana (Mouse-ear cress).